Consider the following 121-residue polypeptide: Large ribosomal subunit protein uL22 (121 aa).

It belongs to the universal ribosomal protein uL22 family. As to quaternary structure, part of the 50S ribosomal subunit.

In terms of biological role, this protein binds specifically to 23S rRNA; its binding is stimulated by other ribosomal proteins, e.g. L4, L17, and L20. It is important during the early stages of 50S assembly. It makes multiple contacts with different domains of the 23S rRNA in the assembled 50S subunit and ribosome. Its function is as follows. The globular domain of the protein is located near the polypeptide exit tunnel on the outside of the subunit, while an extended beta-hairpin is found that lines the wall of the exit tunnel in the center of the 70S ribosome. The chain is Large ribosomal subunit protein uL22 from Kocuria rhizophila (strain ATCC 9341 / DSM 348 / NBRC 103217 / DC2201).